A 673-amino-acid chain; its full sequence is B3 domain-containing protein Os01g0905400 (673 aa).

Residues 1 to 34 (MVELIKVPKIEQEEGNADSHGKEKADVVHEEKTE) show a composition bias toward basic and acidic residues. The disordered stretch occupies residues 1–44 (MVELIKVPKIEQEEGNADSHGKEKADVVHEEKTEKVKRRRKRVS). Residues 79 to 172 (LPSFFKIMVG…VFTVQIFAIS (94 aa)) constitute a DNA-binding region (TF-B3 1). A disordered region spans residues 315-337 (PSFSYPESSNVMTADKESERSHQ). The segment covering 328–337 (ADKESERSHQ) has biased composition (basic and acidic residues). The TF-B3 2 DNA-binding region spans 576–671 (SKKFCITIPP…ELSFQVLVPN (96 aa)).

The protein resides in the nucleus. The sequence is that of B3 domain-containing protein Os01g0905400 from Oryza sativa subsp. japonica (Rice).